The primary structure comprises 247 residues: Protein GrpE (247 aa).

Disordered regions lie at residues 1 to 64 and 214 to 247; these read MNDE…QALD and SMGP…EKSD. Composition is skewed to polar residues over residues 30–39, 49–63, and 228–241; these read DEPSLSNVAE, DVTS…SQAL, and TEQS…TDQQ.

The protein belongs to the GrpE family. As to quaternary structure, homodimer.

It is found in the cytoplasm. Functionally, participates actively in the response to hyperosmotic and heat shock by preventing the aggregation of stress-denatured proteins, in association with DnaK and GrpE. It is the nucleotide exchange factor for DnaK and may function as a thermosensor. Unfolded proteins bind initially to DnaJ; upon interaction with the DnaJ-bound protein, DnaK hydrolyzes its bound ATP, resulting in the formation of a stable complex. GrpE releases ADP from DnaK; ATP binding to DnaK triggers the release of the substrate protein, thus completing the reaction cycle. Several rounds of ATP-dependent interactions between DnaJ, DnaK and GrpE are required for fully efficient folding. The chain is Protein GrpE from Prochlorococcus marinus (strain MIT 9211).